The primary structure comprises 51 residues: Sperm protamine P1 (51 aa).

This sequence belongs to the protamine P1 family. Testis.

It localises to the nucleus. The protein localises to the chromosome. Functionally, protamines substitute for histones in the chromatin of sperm during the haploid phase of spermatogenesis. They compact sperm DNA into a highly condensed, stable and inactive complex. In Nasalis larvatus (Proboscis monkey), this protein is Sperm protamine P1 (PRM1).